Reading from the N-terminus, the 231-residue chain is Peroxisomal membrane protein 11E (231 aa).

At 1–91 (MTTLDLTRAE…LPLVLLGKSK (91 aa)) the chain is on the cytoplasmic side. A helical membrane pass occupies residues 92–108 (NALLSTFLFLDQIVWLG). Topologically, residues 109–202 (RSGIYKNKER…LLQLAPKTIS (94 aa)) are lumenal. The chain crosses the membrane as a helical span at residues 203 to 222 (PRVTGAFGFTTSLISCYQLL). Residues 223-231 (PSRPKLKTP) are Cytoplasmic-facing.

It belongs to the peroxin-11 family. In terms of assembly, homooligomer. Interacts with ARC5 and FIS1B on peroxisomes. In terms of tissue distribution, expressed in leaves and developing siliques.

The protein localises to the peroxisome membrane. In terms of biological role, involved in peroxisomal proliferation. Promotes peroxisomal duplication, aggregation or elongation without fission. This chain is Peroxisomal membrane protein 11E (PEX11E), found in Arabidopsis thaliana (Mouse-ear cress).